Here is a 754-residue protein sequence, read N- to C-terminus: 1,4-alpha-glucan branching enzyme GlgB (754 aa).

Residue aspartate 431 is the Nucleophile of the active site. Glutamate 484 acts as the Proton donor in catalysis.

The protein belongs to the glycosyl hydrolase 13 family. GlgB subfamily. As to quaternary structure, monomer.

The catalysed reaction is Transfers a segment of a (1-&gt;4)-alpha-D-glucan chain to a primary hydroxy group in a similar glucan chain.. Its pathway is glycan biosynthesis; glycogen biosynthesis. Catalyzes the formation of the alpha-1,6-glucosidic linkages in glycogen by scission of a 1,4-alpha-linked oligosaccharide from growing alpha-1,4-glucan chains and the subsequent attachment of the oligosaccharide to the alpha-1,6 position. In Prochlorococcus marinus (strain MIT 9301), this protein is 1,4-alpha-glucan branching enzyme GlgB.